Consider the following 239-residue polypeptide: Phospholipase A2 (239 aa).

Positions 1 to 19 (MSLIIVLVISVLSADAVLS) are cleaved as a signal peptide. Positions 20 to 105 (MDNELYLNLE…GRCLSVGESE (86 aa)) are excised as a propeptide. Positions 113, 115, and 117 each coordinate Ca(2+). 5 disulfide bridges follow: Cys114–Cys136, Cys135–Cys174, Cys142–Cys167, Cys165–Cys202, and Cys207–Cys217. The active site involves His139. Residue Asp140 coordinates Ca(2+). Residues 211 to 213 (RSP) constitute a propeptide that is removed on maturation.

This sequence belongs to the phospholipase A2 family. Group III subfamily. As to quaternary structure, heterodimer composed of a small subunit and a large subunit; disulfid-linked. Requires Ca(2+) as cofactor. Expressed by the venom gland.

Its subcellular location is the secreted. It carries out the reaction a 1,2-diacyl-sn-glycero-3-phosphocholine + H2O = a 1-acyl-sn-glycero-3-phosphocholine + a fatty acid + H(+). Functionally, toxic phospholipase A2, which may catalyze the calcium-dependent hydrolysis of the 2-acyl groups in 3-sn-phosphoglycerides. Inhibits both skeletal (RYR1) and cardiac (RYR2) ryanodine receptors (calcium release channels). Probably blocks ryanodine receptors by generating a lipid product. The protein is Phospholipase A2 of Hoffmannihadrurus gertschi (Scorpion).